The sequence spans 239 residues: Probable fimbrial chaperone YehC (239 aa).

The first 31 residues, 1-31 (MAAIPWRPFNLRGIKMKGLLSLLIFSMVLPA), serve as a signal peptide directing secretion.

Belongs to the periplasmic pilus chaperone family.

The protein resides in the periplasm. Its function is as follows. Part of the yehABCD fimbrial operon. Could contribute to adhesion to various surfaces in specific environmental niches. The protein is Probable fimbrial chaperone YehC (yehC) of Escherichia coli (strain K12).